We begin with the raw amino-acid sequence, 464 residues long: Ribulose bisphosphate carboxylase/oxygenase activase A, chloroplastic (464 aa).

The transit peptide at 1–48 (MAAAFSSTVGAPASTPTNFLGKKLKKQVTSAVNYHGKSSKANRFTVMA) directs the protein to the chloroplast. ATP is bound at residue 155–162 (GGKGQGKS).

Belongs to the RuBisCO activase family.

It is found in the plastid. The protein localises to the chloroplast stroma. Functionally, activation of RuBisCO (ribulose-1,5-bisphosphate carboxylase/oxygenase; EC 4.1.1.39) involves the ATP-dependent carboxylation of the epsilon-amino group of lysine leading to a carbamate structure. In Hordeum vulgare (Barley), this protein is Ribulose bisphosphate carboxylase/oxygenase activase A, chloroplastic (RCAA).